A 126-amino-acid chain; its full sequence is Hydrogenase maturation factor HypA (126 aa).

Histidine 2 lines the Ni(2+) pocket. The Zn(2+) site is built by cysteine 78, cysteine 81, cysteine 97, and cysteine 100.

The protein belongs to the HypA/HybF family.

Involved in the maturation of [NiFe] hydrogenases. Required for nickel insertion into the metal center of the hydrogenase. The polypeptide is Hydrogenase maturation factor HypA (Methanococcus maripaludis (strain DSM 14266 / JCM 13030 / NBRC 101832 / S2 / LL)).